The chain runs to 324 residues: tRNA dimethylallyltransferase (324 aa).

Residue Gly-17–Thr-24 coordinates ATP. Thr-19–Thr-24 contacts substrate. Interaction with substrate tRNA stretches follow at residues Asp-42 to Leu-45, Gln-166 to Arg-170, and Arg-251 to Arg-256.

The protein belongs to the IPP transferase family. In terms of assembly, monomer. The cofactor is Mg(2+).

It carries out the reaction adenosine(37) in tRNA + dimethylallyl diphosphate = N(6)-dimethylallyladenosine(37) in tRNA + diphosphate. Catalyzes the transfer of a dimethylallyl group onto the adenine at position 37 in tRNAs that read codons beginning with uridine, leading to the formation of N6-(dimethylallyl)adenosine (i(6)A). The sequence is that of tRNA dimethylallyltransferase from Burkholderia pseudomallei (strain 1106a).